We begin with the raw amino-acid sequence, 167 residues long: Putative pre-16S rRNA nuclease (167 aa).

Residues 1–24 (MVLTQHRVPDRPGDPDQDPGRGRR) are disordered. Over residues 7–21 (RVPDRPGDPDQDPGR) the composition is skewed to basic and acidic residues.

This sequence belongs to the YqgF nuclease family.

Its subcellular location is the cytoplasm. Could be a nuclease involved in processing of the 5'-end of pre-16S rRNA. The polypeptide is Putative pre-16S rRNA nuclease (Mycolicibacterium paratuberculosis (strain ATCC BAA-968 / K-10) (Mycobacterium paratuberculosis)).